Consider the following 77-residue polypeptide: Conotoxin G11.1 (77 aa).

The N-terminal stretch at 1–20 (MKLFLAIVLILMLQFLSTGA) is a signal peptide. The propeptide occupies 21-45 (ETSDNHASRSTTALRDWLLGPKAKR). Cystine bridges form between Cys46–Cys60, Cys53–Cys65, Cys59–Cys69, and Cys64–Cys76.

This sequence belongs to the conotoxin I3 superfamily. As to expression, expressed by the venom duct.

It is found in the secreted. Its function is as follows. May embed in the membrane and bind to the voltage sensor domain of a ion channel. Does not induce paralysis when injected in fish, leading to the hypothesis that it may be part of the sedative nirvana cabal. This Conus geographus (Geography cone) protein is Conotoxin G11.1.